Reading from the N-terminus, the 108-residue chain is Ribonuclease P protein component 4 (108 aa).

The Zn(2+) site is built by C60, C63, C86, and C89.

It belongs to the eukaryotic/archaeal RNase P protein component 4 family. In terms of assembly, consists of a catalytic RNA component and at least 4-5 protein subunits. Requires Zn(2+) as cofactor.

It localises to the cytoplasm. The catalysed reaction is Endonucleolytic cleavage of RNA, removing 5'-extranucleotides from tRNA precursor.. In terms of biological role, part of ribonuclease P, a protein complex that generates mature tRNA molecules by cleaving their 5'-ends. In Sulfurisphaera tokodaii (strain DSM 16993 / JCM 10545 / NBRC 100140 / 7) (Sulfolobus tokodaii), this protein is Ribonuclease P protein component 4.